We begin with the raw amino-acid sequence, 732 residues long: Catalase-peroxidase (732 aa).

The disordered stretch occupies residues 1–26 (MDAKTDDQGGKCPFPHGGGSRGHRNR). Residues 97-219 (WHSAGTYRTT…LGAVQMGLIY (123 aa)) constitute a cross-link (tryptophyl-tyrosyl-methioninium (Trp-Tyr) (with M-245)). Catalysis depends on histidine 98, which acts as the Proton acceptor. A cross-link (tryptophyl-tyrosyl-methioninium (Tyr-Met) (with W-97)) is located at residues 219–245 (YVNPEGPNGNPDPVAAAKDIRETFARM). Histidine 260 provides a ligand contact to heme b.

Belongs to the peroxidase family. Peroxidase/catalase subfamily. Homodimer or homotetramer. It depends on heme b as a cofactor. In terms of processing, formation of the three residue Trp-Tyr-Met cross-link is important for the catalase, but not the peroxidase activity of the enzyme.

It catalyses the reaction H2O2 + AH2 = A + 2 H2O. It carries out the reaction 2 H2O2 = O2 + 2 H2O. Functionally, bifunctional enzyme with both catalase and broad-spectrum peroxidase activity. The protein is Catalase-peroxidase of Rhodopseudomonas palustris (strain BisB5).